A 432-amino-acid chain; its full sequence is Adenylosuccinate synthetase (432 aa).

Residues 12-18 (GDEGKGK) and 40-42 (GHT) contribute to the GTP site. D13 acts as the Proton acceptor in catalysis. Mg(2+)-binding residues include D13 and G40. Residues 13-16 (DEGK), 38-41 (NAGH), T129, R143, Q224, T239, and R303 contribute to the IMP site. Residue H41 is the Proton donor of the active site. 299 to 305 (VTTGRRR) serves as a coordination point for substrate. GTP contacts are provided by residues R305, 331 to 333 (KLD), and 413 to 415 (GVG).

It belongs to the adenylosuccinate synthetase family. In terms of assembly, homodimer. It depends on Mg(2+) as a cofactor.

The protein resides in the cytoplasm. It carries out the reaction IMP + L-aspartate + GTP = N(6)-(1,2-dicarboxyethyl)-AMP + GDP + phosphate + 2 H(+). It participates in purine metabolism; AMP biosynthesis via de novo pathway; AMP from IMP: step 1/2. In terms of biological role, plays an important role in the de novo pathway of purine nucleotide biosynthesis. Catalyzes the first committed step in the biosynthesis of AMP from IMP. The polypeptide is Adenylosuccinate synthetase (Mycobacterium avium (strain 104)).